Consider the following 679-residue polypeptide: Methionine--tRNA ligase (679 aa).

Positions 15–25 (PYANGPVHIGH) match the 'HIGH' region motif. C147, C150, C160, and C163 together coordinate Zn(2+). The 'KMSKS' region signature appears at 332 to 336 (KISTS). ATP is bound at residue T335. The tRNA-binding domain occupies 578–679 (DFMKLDIRVG…REVKPGSEVK (102 aa)).

Belongs to the class-I aminoacyl-tRNA synthetase family. MetG type 1 subfamily. As to quaternary structure, homodimer. Zn(2+) serves as cofactor.

The protein resides in the cytoplasm. It carries out the reaction tRNA(Met) + L-methionine + ATP = L-methionyl-tRNA(Met) + AMP + diphosphate. Its function is as follows. Is required not only for elongation of protein synthesis but also for the initiation of all mRNA translation through initiator tRNA(fMet) aminoacylation. The polypeptide is Methionine--tRNA ligase (Bacteroides fragilis (strain ATCC 25285 / DSM 2151 / CCUG 4856 / JCM 11019 / LMG 10263 / NCTC 9343 / Onslow / VPI 2553 / EN-2)).